Reading from the N-terminus, the 154-residue chain is Large ribosomal subunit protein uL13 (154 aa).

Belongs to the universal ribosomal protein uL13 family. In terms of assembly, part of the 50S ribosomal subunit.

Functionally, this protein is one of the early assembly proteins of the 50S ribosomal subunit, although it is not seen to bind rRNA by itself. It is important during the early stages of 50S assembly. This Rhizobium leguminosarum bv. trifolii (strain WSM2304) protein is Large ribosomal subunit protein uL13.